The primary structure comprises 416 residues: Ferrochelatase, mitochondrial (416 aa).

Residues 1–47 (MAAALRSAGVLLRDRLLYGGSRACQPRRCQSGAATAAAATETAQRAR) constitute a mitochondrion transit peptide. The interval 41–62 (ETAQRARSPKPQAQPGNRKPRT) is disordered. Lysine 50 is modified (N6-acetyllysine). Residues arginine 108, tyrosine 116, and serine 123 each coordinate protoporphyrin IX. N6-succinyllysine is present on lysine 131. [2Fe-2S] cluster is bound at residue cysteine 189. The active site involves histidine 223. Lysine 283 carries the post-translational modification N6-acetyllysine; alternate. Residue lysine 283 is modified to N6-succinyllysine; alternate. Aspartate 376 is an active-site residue. Cysteine 396, cysteine 399, and cysteine 404 together coordinate [2Fe-2S] cluster. Residue lysine 408 is modified to N6-acetyllysine; alternate. Lysine 408 bears the N6-succinyllysine; alternate mark.

The protein belongs to the ferrochelatase family. In terms of assembly, homodimer. Homotetramer. Interaction with PGRMC1; the interaction results in decreased FECH activity. Interacts with ABCB10 and SLC25A37; this interaction forms an oligomeric complex. Forms a complex with ABCB7 and ABCB10, where a dimeric FECH bridges ABCB7 and ABCB10 homodimers; this complex may be required for cellular iron homeostasis, mitochondrial function and heme biosynthesis. Interacts with ABCB7 and ABCB10. [2Fe-2S] cluster serves as cofactor.

The protein localises to the mitochondrion inner membrane. It carries out the reaction heme b + 2 H(+) = protoporphyrin IX + Fe(2+). It participates in porphyrin-containing compound metabolism; protoheme biosynthesis; protoheme from protoporphyrin-IX: step 1/1. Catalyzes the ferrous insertion into protoporphyrin IX and participates in the terminal step in the heme biosynthetic pathway. In Bos taurus (Bovine), this protein is Ferrochelatase, mitochondrial.